The sequence spans 203 residues: Abscisic acid receptor PYL5 (203 aa).

Residues 1-18 (MRSPVQLQHGSDATNGFH) show a composition bias toward polar residues. A disordered region spans residues 1-29 (MRSPVQLQHGSDATNGFHTLQPHDQTDGP). Residues 51-201 (HDVGPDQCCS…NLQSLARSTN (151 aa)) form an START-like region. Abscisate contacts are provided by residues lysine 87, 117–122 (AVSSTE), 144–150 (RLKNYRS), and glutamate 166. The Gate loop motif lies at 113–117 (SGLPA). The Latch loop signature appears at 143-145 (HRL).

The protein belongs to the PYR/PYL/RCAR abscisic acid intracellular receptor family. Monomer. Homodimer. Binds ABA on one subunit only. Binds to CARs protein in an ABA-independent manner, both at the plasma membrane and in the nucleus. Binds both (-)-ABA and (+)-ABA. Interacts with HAB1, ABI1 and ABI2, and possibly with other PP2Cs.

Its subcellular location is the cytoplasm. It localises to the nucleus. The protein localises to the cell membrane. Receptor for abscisic acid (ABA) required for ABA-mediated responses such as stomatal closure and germination inhibition. Inhibits the activity of group-A protein phosphatases type 2C (PP2Cs) in an ABA-independent manner but more efficiently when activated by ABA. Confers enhanced sensitivity to ABA. Can be activated by both (-)-ABA and (+)-ABA. The sequence is that of Abscisic acid receptor PYL5 (PYL5) from Arabidopsis thaliana (Mouse-ear cress).